The following is a 400-amino-acid chain: Phosphoglycerate kinase (400 aa).

Substrate-binding positions include 22–24 (DFN), R38, 61–64 (HLGR), R119, and R152. ATP contacts are provided by residues K205, G296, E327, and 353–356 (GGDT).

This sequence belongs to the phosphoglycerate kinase family. As to quaternary structure, monomer.

It localises to the cytoplasm. The catalysed reaction is (2R)-3-phosphoglycerate + ATP = (2R)-3-phospho-glyceroyl phosphate + ADP. It functions in the pathway carbohydrate degradation; glycolysis; pyruvate from D-glyceraldehyde 3-phosphate: step 2/5. This chain is Phosphoglycerate kinase, found in Campylobacter jejuni subsp. jejuni serotype O:2 (strain ATCC 700819 / NCTC 11168).